We begin with the raw amino-acid sequence, 336 residues long: GTPase Obg (336 aa).

The Obg domain occupies 1–159 (MKFIDEATII…RRLQLELILL (159 aa)). The OBG-type G domain occupies 160 to 333 (ADVGLLGLPN…LCRDIMLFIN (174 aa)). GTP-binding positions include 166-173 (GLPNVGKS), 191-195 (FTTLV), 213-216 (DIPG), 283-286 (NKLD), and 314-316 (SAM). Mg(2+) is bound by residues Ser173 and Thr193.

The protein belongs to the TRAFAC class OBG-HflX-like GTPase superfamily. OBG GTPase family. In terms of assembly, monomer. Requires Mg(2+) as cofactor.

The protein resides in the cytoplasm. In terms of biological role, an essential GTPase which binds GTP, GDP and possibly (p)ppGpp with moderate affinity, with high nucleotide exchange rates and a fairly low GTP hydrolysis rate. Plays a role in control of the cell cycle, stress response, ribosome biogenesis and in those bacteria that undergo differentiation, in morphogenesis control. The protein is GTPase Obg of Baumannia cicadellinicola subsp. Homalodisca coagulata.